A 101-amino-acid polypeptide reads, in one-letter code: MDEGISKKFAIQLLEDDAERIKMLIRNQKNSLCISQCKAFEEVVDTQMYGFSRQVTYATRLGILTNDEGHRLLSDLERELNQLYTDVYEETQEKNEIGKEG.

Belongs to the UPF0358 family.

This Enterococcus faecalis (strain ATCC 700802 / V583) protein is UPF0358 protein EF_2458.